The following is a 227-amino-acid chain: Ras-related protein Rab-3C (227 aa).

Residues S39, G42, K43, T44, S45, T56, S57, S61, and T62 each contribute to the GTP site. T44 is a Mg(2+) binding site. The short motif at 53-66 (DSFTSAFVSTVGID) is the Switch 1 element. T62 and D85 together coordinate Mg(2+). T86 carries the post-translational modification Phosphothreonine. The Switch 2 motif lies at 86 to 104 (TAGQERYRTITTAYYRGAM). GTP contacts are provided by G88, N143, K144, D146, A174, and K175. S196 and S198 each carry phosphoserine. T206 is subject to Phosphothreonine. 2 S-geranylgeranyl cysteine lipidation sites follow: C225 and C227. The residue at position 227 (C227) is a Cysteine methyl ester.

It belongs to the small GTPase superfamily. Rab family. Interacts with RIMS1, RIMS2, RPH3A and RPH3AL. The GTP-bound form interacts with REP15. Interacts with GDI2, CHM and CHML; phosphorylation at Thr-86 disrupts these interactions. Interacts with MADD (via uDENN domain); the GTP-bound form is preferred for interaction. Mg(2+) serves as cofactor. Post-translationally, phosphorylation of Thr-86 in the switch II region by LRRK2 prevents the association of RAB regulatory proteins, including CHM, CHML and RAB GDP dissociation inhibitor GDI2.

Its subcellular location is the cell membrane. It catalyses the reaction GTP + H2O = GDP + phosphate + H(+). With respect to regulation, regulated by guanine nucleotide exchange factors (GEFs) which promote the exchange of bound GDP for free GTP. Regulated by GTPase activating proteins (GAPs) which increase the GTP hydrolysis activity. Inhibited by GDP dissociation inhibitors (GDIs) which prevent Rab-GDP dissociation. In terms of biological role, the small GTPases Rab are key regulators of intracellular membrane trafficking, from the formation of transport vesicles to their fusion with membranes. Rabs cycle between an inactive GDP-bound form and an active GTP-bound form that is able to recruit to membranes different sets of downstream effectors directly responsible for vesicle formation, movement, tethering and fusion. This Bos taurus (Bovine) protein is Ras-related protein Rab-3C (RAB3C).